The primary structure comprises 267 residues: 4-hydroxy-2-oxo-heptane-1,7-dioate aldolase (267 aa).

Histidine 45 acts as the Proton acceptor in catalysis. Glutamine 147 is a substrate binding site. Glutamate 149 provides a ligand contact to a divalent metal cation. Alanine 174 and aspartate 175 together coordinate substrate. An a divalent metal cation-binding site is contributed by aspartate 175.

It belongs to the HpcH/HpaI aldolase family. As to quaternary structure, homohexamer; trimer of dimers. A divalent metal cation serves as cofactor.

It catalyses the reaction 4-hydroxy-2-oxoheptanedioate = succinate semialdehyde + pyruvate. It functions in the pathway aromatic compound metabolism; 4-hydroxyphenylacetate degradation; pyruvate and succinate semialdehyde from 4-hydroxyphenylacetate: step 7/7. Its function is as follows. Catalyzes the reversible retro-aldol cleavage of 4-hydroxy-2-ketoheptane-1,7-dioate (HKHD) to pyruvate and succinic semialdehyde. The protein is 4-hydroxy-2-oxo-heptane-1,7-dioate aldolase of Shigella flexneri.